A 151-amino-acid chain; its full sequence is Mediator of RNA polymerase II transcription subunit 32 (151 aa).

Positions 128 to 151 (GVAPGSVHSSSTGFDSRFSEDSTQ) are disordered.

The protein belongs to the mediator complex subunit 32 family. Oligomers. Component of the Mediator complex. Interacts with MED6. Interacts with GEBPL.

The protein resides in the nucleus. Component of the Mediator complex, a coactivator involved in the regulated transcription of nearly all RNA polymerase II-dependent genes. Mediator functions as a bridge to convey information from gene-specific regulatory proteins to the basal RNA polymerase II transcription machinery. The Mediator complex, having a compact conformation in its free form, is recruited to promoters by direct interactions with regulatory proteins and serves for the assembly of a functional pre-initiation complex with RNA polymerase II and the general transcription factors. In Arabidopsis thaliana (Mouse-ear cress), this protein is Mediator of RNA polymerase II transcription subunit 32 (MED32).